The primary structure comprises 136 residues: Large ribosomal subunit protein bL20 (136 aa).

Belongs to the bacterial ribosomal protein bL20 family.

Functionally, binds directly to 23S ribosomal RNA and is necessary for the in vitro assembly process of the 50S ribosomal subunit. It is not involved in the protein synthesizing functions of that subunit. This is Large ribosomal subunit protein bL20 from Tropheryma whipplei (strain TW08/27) (Whipple's bacillus).